We begin with the raw amino-acid sequence, 264 residues long: Thiazole synthase (264 aa).

The active-site Schiff-base intermediate with DXP is K101. Residues G162, 188-189, and 210-211 each bind 1-deoxy-D-xylulose 5-phosphate; these read AG and NT.

The protein belongs to the ThiG family. As to quaternary structure, homotetramer. Forms heterodimers with either ThiH or ThiS.

It localises to the cytoplasm. It catalyses the reaction [ThiS sulfur-carrier protein]-C-terminal-Gly-aminoethanethioate + 2-iminoacetate + 1-deoxy-D-xylulose 5-phosphate = [ThiS sulfur-carrier protein]-C-terminal Gly-Gly + 2-[(2R,5Z)-2-carboxy-4-methylthiazol-5(2H)-ylidene]ethyl phosphate + 2 H2O + H(+). The protein operates within cofactor biosynthesis; thiamine diphosphate biosynthesis. Functionally, catalyzes the rearrangement of 1-deoxy-D-xylulose 5-phosphate (DXP) to produce the thiazole phosphate moiety of thiamine. Sulfur is provided by the thiocarboxylate moiety of the carrier protein ThiS. In vitro, sulfur can be provided by H(2)S. This Chromobacterium violaceum (strain ATCC 12472 / DSM 30191 / JCM 1249 / CCUG 213 / NBRC 12614 / NCIMB 9131 / NCTC 9757 / MK) protein is Thiazole synthase.